Reading from the N-terminus, the 68-residue chain is 1-carboxybiuret hydrolase subunit AtzG (68 aa).

Heterotetramer consisting of 2 AtzE and 2 AtzG subunits.

It functions in the pathway xenobiotic degradation; atrazine degradation. Important for the activity of the AtzE subunit of 1-carboxybiuret hydrolase. The chain is 1-carboxybiuret hydrolase subunit AtzG from Pseudomonas sp. (strain ADP).